The primary structure comprises 391 residues: NADH-quinone oxidoreductase subunit D (391 aa).

This sequence belongs to the complex I 49 kDa subunit family. In terms of assembly, NDH-1 is composed of 14 different subunits. Subunits NuoB, C, D, E, F, and G constitute the peripheral sector of the complex.

It is found in the cell inner membrane. The catalysed reaction is a quinone + NADH + 5 H(+)(in) = a quinol + NAD(+) + 4 H(+)(out). Functionally, NDH-1 shuttles electrons from NADH, via FMN and iron-sulfur (Fe-S) centers, to quinones in the respiratory chain. The immediate electron acceptor for the enzyme in this species is believed to be ubiquinone. Couples the redox reaction to proton translocation (for every two electrons transferred, four hydrogen ions are translocated across the cytoplasmic membrane), and thus conserves the redox energy in a proton gradient. The chain is NADH-quinone oxidoreductase subunit D from Rickettsia canadensis (strain McKiel).